A 359-amino-acid chain; its full sequence is Large ribosomal subunit protein bL27m (359 aa).

The N-terminal 24 residues, 1–24, are a transit peptide targeting the mitochondrion; the sequence is MSFWKVATLWQMPLRPSILVQVRT. The interval 29 to 48 is disordered; sequence AAGSRTSMKDSAGRRLGPKK. A compositionally biased stretch (basic and acidic residues) spans 35-48; it reads SMKDSAGRRLGPKK.

Belongs to the bacterial ribosomal protein bL27 family.

The protein resides in the mitochondrion. Its function is as follows. Component of the large subunit of mitochondrial ribosome. The sequence is that of Large ribosomal subunit protein bL27m (MRPL2) from Eremothecium gossypii (strain ATCC 10895 / CBS 109.51 / FGSC 9923 / NRRL Y-1056) (Yeast).